Consider the following 342-residue polypeptide: GTPase Obg (342 aa).

An Obg domain is found at 1–159 (MQFIDQAQIE…KLLRLELKLL (159 aa)). Positions 160 to 330 (AEVGIIGLPN…MLQEVWGILD (171 aa)) constitute an OBG-type G domain. Residues 166-173 (GLPNAGKS), 191-195 (FTTLI), 213-216 (DIPG), 280-283 (NKID), and 311-313 (SAV) each bind GTP. Residues Ser173 and Thr193 each contribute to the Mg(2+) site.

Belongs to the TRAFAC class OBG-HflX-like GTPase superfamily. OBG GTPase family. Monomer. The cofactor is Mg(2+).

The protein resides in the cytoplasm. An essential GTPase which binds GTP, GDP and possibly (p)ppGpp with moderate affinity, with high nucleotide exchange rates and a fairly low GTP hydrolysis rate. Plays a role in control of the cell cycle, stress response, ribosome biogenesis and in those bacteria that undergo differentiation, in morphogenesis control. This is GTPase Obg from Trichormus variabilis (strain ATCC 29413 / PCC 7937) (Anabaena variabilis).